A 250-amino-acid chain; its full sequence is Large ribosomal subunit protein uL4 (250 aa).

Disordered regions lie at residues 1–20 (MQVTVRDLDGDDAGTLDLPR) and 51–101 (YAGL…HGLD). The segment covering 92-101 (PKAEKDHGLD) has biased composition (basic and acidic residues).

It belongs to the universal ribosomal protein uL4 family. In terms of assembly, part of the 50S ribosomal subunit.

One of the primary rRNA binding proteins, this protein initially binds near the 5'-end of the 23S rRNA. It is important during the early stages of 50S assembly. It makes multiple contacts with different domains of the 23S rRNA in the assembled 50S subunit and ribosome. Functionally, forms part of the polypeptide exit tunnel. The polypeptide is Large ribosomal subunit protein uL4 (Halobacterium salinarum (strain ATCC 29341 / DSM 671 / R1)).